The primary structure comprises 437 residues: UDP-sugar transporter protein SLC35A5 (437 aa).

At 1–21 (MKVIFLRQLKTRGMERKCSRR) the chain is on the cytoplasmic side. Residues 22 to 42 (PGLGPPTLYTFLLGIIFITLS) traverse the membrane as a helical segment. The Lumenal segment spans residues 43–65 (SSRILLVKYSANEENKYDYLPTT). A helical membrane pass occupies residues 66-86 (VNVCSELMKLILCILVSLCVI). The Cytoplasmic portion of the chain corresponds to 87-106 (KKEDHQSRHLRCTSWKEFSS). The helical transmembrane segment at 107–129 (FMKWSIPAFLYFLDNLIVFYVLS) threads the bilayer. The Lumenal segment spans residues 130 to 132 (YLQ). A helical transmembrane segment spans residues 133–155 (PAMAVIFSNFSIITTALLFRIVL). Residues 156 to 158 (KRH) lie on the Cytoplasmic side of the membrane. Residues 159-179 (LNWIQWASLLILFLSIVALTA) traverse the membrane as a helical segment. Topologically, residues 180–241 (STKTSQHELA…TTARVFSHIR (62 aa)) are lumenal. A glycan (N-linked (GlcNAc...) asparagine) is linked at asparagine 217. Residues 242–262 (LGLGHVLIIVQCFISSMANIY) form a helical membrane-spanning segment. Over 263–276 (NEKILKEGTQLTES) the chain is Cytoplasmic. Residues 277–297 (IFIQNSKLYFFGIVFNGLTLV) traverse the membrane as a helical segment. The Lumenal portion of the chain corresponds to 298 to 316 (LQSSNRDQIQNCGFFYGHN). The chain crosses the membrane as a helical span at residues 317-337 (AFSVVLIFVTAFQGLSVAFIL). Topologically, residues 338–343 (KFLDNM) are cytoplasmic. Residues 344–364 (FHVLMAQVTTVIITTVSVLVF) form a helical membrane-spanning segment. Residues 365-367 (DFR) are Lumenal-facing. Residues 368–388 (PSLDFFLEAPSVLLSIFIYNA) form a helical membrane-spanning segment. Topologically, residues 389 to 437 (SKPQNLECAPKQERIRHLSGSLWERSSGDGEELERLTKLKSDDSDDDTL) are cytoplasmic. A phosphoserine mark is found at serine 407, serine 429, and serine 432. A disordered region spans residues 412–437 (ERSSGDGEELERLTKLKSDDSDDDTL). Basic and acidic residues predominate over residues 421–430 (LERLTKLKSD).

The protein belongs to the nucleotide-sugar transporter family. SLC35A subfamily. Probably forms homooligomers and heterooligomers with SLC35A1, SLC35A2, SLC35A3 and SLC35A4.

The protein resides in the golgi apparatus membrane. It carries out the reaction UMP(out) + UDP-alpha-D-glucuronate(in) = UMP(in) + UDP-alpha-D-glucuronate(out). The enzyme catalyses UMP(out) + UDP-N-acetyl-alpha-D-glucosamine(in) = UMP(in) + UDP-N-acetyl-alpha-D-glucosamine(out). It catalyses the reaction UDP-N-acetyl-alpha-D-galactosamine(in) + UMP(out) = UDP-N-acetyl-alpha-D-galactosamine(out) + UMP(in). Functionally, probable UDP-sugar:UMP transmembrane antiporter involved in UDP-alpha-D-glucuronate/UDP-GlcA, UDP-GlcNAc/UDP-N-acetyl-alpha-D-glucosamine and UDP-N-acetyl-alpha-D-galactosamine/UDP-GalNAc transport from the cytosol to the lumen of the Golgi. In Mus musculus (Mouse), this protein is UDP-sugar transporter protein SLC35A5.